A 246-amino-acid chain; its full sequence is TVP38/TMEM64 family membrane protein MT0653 (246 aa).

5 consecutive transmembrane segments (helical) span residues Leu19 to Ile39, Leu57 to Ala77, Leu83 to Val103, Ala157 to Ala177, and Leu196 to Ala216.

Belongs to the TVP38/TMEM64 family.

The protein localises to the cell membrane. The protein is TVP38/TMEM64 family membrane protein MT0653 of Mycobacterium tuberculosis (strain CDC 1551 / Oshkosh).